The primary structure comprises 510 residues: NADH-quinone oxidoreductase subunit N (510 aa).

Helical transmembrane passes span 14–34, 42–62, 84–104, 113–133, 135–155, 170–190, 208–228, 247–267, 286–306, 323–343, 346–366, 390–410, 426–446, and 466–486; these read LLPE…DLFA, VIGW…IINM, AFKL…LSYL, GEYY…ASSA, LITL…LVGL, VVSG…VYGL, MAGY…GLAF, PTPV…ALIF, FFFE…MIIG, SGIA…SLFF, VIFY…VIMV, AIAM…VGFF, WLAA…FGII, and IWTF…FPGL.

It belongs to the complex I subunit 2 family. NDH-1 is composed of 14 different subunits. Subunits NuoA, H, J, K, L, M, N constitute the membrane sector of the complex.

Its subcellular location is the cell membrane. The enzyme catalyses a quinone + NADH + 5 H(+)(in) = a quinol + NAD(+) + 4 H(+)(out). In terms of biological role, NDH-1 shuttles electrons from NADH, via FMN and iron-sulfur (Fe-S) centers, to quinones in the respiratory chain. The immediate electron acceptor for the enzyme in this species is believed to be a menaquinone. Couples the redox reaction to proton translocation (for every two electrons transferred, four hydrogen ions are translocated across the cytoplasmic membrane), and thus conserves the redox energy in a proton gradient. The protein is NADH-quinone oxidoreductase subunit N of Brevibacillus brevis (strain 47 / JCM 6285 / NBRC 100599).